A 250-amino-acid polypeptide reads, in one-letter code: DNA polymerase sliding clamp (250 aa).

The protein belongs to the PCNA family. As to quaternary structure, homotrimer. The subunits circularize to form a toroid; DNA passes through its center. Replication factor C (RFC) is required to load the toroid on the DNA.

In terms of biological role, sliding clamp subunit that acts as a moving platform for DNA processing. Responsible for tethering the catalytic subunit of DNA polymerase and other proteins to DNA during high-speed replication. This is DNA polymerase sliding clamp from Methanococcus maripaludis (strain DSM 14266 / JCM 13030 / NBRC 101832 / S2 / LL).